The primary structure comprises 1771 residues: Gag-Pro-Pol polyprotein (1771 aa).

Glycine 2 is lipidated: N-myristoyl glycine; by host. Residues 101-161 (AAVAQTEEIL…TKKPKRFPVL (61 aa)) constitute a propeptide that is removed on maturation. Polar residues-rich tracts occupy residues 113–125 (NSQT…SQNP) and 140–152 (KSSS…LSST). The disordered stretch occupies residues 113 to 178 (NSQTDLTKTS…DPEDPNPSEV (66 aa)). Positions 202–205 (PPPY) match the PPXY motif motif. The PTAP/PSAP motif signature appears at 210–213 (PSAP). Positions 216-257 (MAVVNPKEELKEKIAQLEEQIKLEELHQALISKLQKLKTGNE) form a coiled coil. Residues 260–279 (THPDTAGGLSRTPHWPGQHI) form a disordered region. Residues 335–338 (ATAP) carry the PTAP/PSAP motif motif. 2 consecutive CCHC-type zinc fingers follow at residues 547 to 564 (GCCF…NCHE) and 576 to 593 (GLCP…ECKS). The tract at residues 592 to 626 (KSKTDNQGNPIPPHQGNRVEGPAPGPETSLWGSQL) is disordered. The Peptidase A2 domain maps to 780–856 (FTGLIDTGAD…LPVNLWGRDL (77 aa)). Aspartate 785 acts as the Protease; shared with dimeric partner in catalysis. One can recognise a G-patch domain in the interval 867–913 (PNDIVTAQMLAQGYSPGKGLGKKENGILHPIPNQGQSNKKGFGNFLT). In terms of domain architecture, Reverse transcriptase spans 959 to 1147 (LEAGHITESS…DPYTYLGFEL (189 aa)). Aspartate 1024, aspartate 1099, aspartate 1100, aspartate 1370, glutamate 1399, aspartate 1420, and aspartate 1484 together coordinate Mg(2+). In terms of domain architecture, RNase H type-1 spans 1361–1492 (LNNALLVFTD…ADLATKIVAS (132 aa)). An Integrase-type zinc finger spans residues 1496 to 1537 (TNLESAQNAHTLHHLNAQTLRLMFNIPREQARQIVKQCPICV). Zn(2+)-binding residues include histidine 1505, histidine 1509, cysteine 1533, and cysteine 1536. Positions 1550–1719 (RGLFPNMIWQ…NPKKQFAMVK (170 aa)) constitute an Integrase catalytic domain. The Mg(2+) site is built by aspartate 1561, aspartate 1618, and glutamate 1654. Positions 1716 to 1765 (AMVKWKDPLDNTWHGPDPVLIWGRGSVCVYSQTYDAARWLPERLVRQVSN) form a DNA-binding region, integrase-type.

The protein belongs to the retroviral Pol polyprotein family. In terms of assembly, homodimer. As to quaternary structure, interacts with the G-patch peptide. Interacts with the reverse transcriptase/ribonuclease H. In terms of assembly, homotrimer. The cofactor is Mg(2+). In terms of processing, released by autocatalytic processing. The protease can undergo further autoprocessing to yield 2 shorter but enzymatically active forms of 12 kDa and 13 kDa. Post-translationally, myristoylated. Myristoylation of the matrix (MA) domain mediates the transport and binding of Gag polyproteins to the host plasma membrane and is required for the assembly of viral particles. Specific enzymatic cleavages in vivo yield mature proteins.

The protein resides in the virion. The enzyme catalyses DNA(n) + a 2'-deoxyribonucleoside 5'-triphosphate = DNA(n+1) + diphosphate. The catalysed reaction is Endonucleolytic cleavage to 5'-phosphomonoester.. It catalyses the reaction dUTP + H2O = dUMP + diphosphate + H(+). In terms of biological role, matrix protein. Functionally, nucleocapsid protein p14: Nucleocapsid protein. Its function is as follows. Capsid protein. The aspartyl protease mediates proteolytic cleavages of Gag and Gag-Pol polyproteins during or shortly after the release of the virion from the plasma membrane. Cleavages take place as an ordered, step-wise cascade to yield mature proteins. This process is called maturation. Displays maximal activity during the budding process just prior to particle release from the cell. In terms of biological role, enhances the activity of the reverse transcriptase. May be part of the mature RT. Functionally, RT is a multifunctional enzyme that converts the viral dimeric RNA genome into dsDNA in the cytoplasm, shortly after virus entry into the cell. This enzyme displays a DNA polymerase activity that can copy either DNA or RNA templates, and a ribonuclease H (RNase H) activity that cleaves the RNA strand of RNA-DNA heteroduplexes in a partially processive 3' to 5' endonucleasic mode. Conversion of viral genomic RNA into dsDNA requires many steps. A tRNA binds to the primer-binding site (PBS) situated at the 5' end of the viral RNA. RT uses the 3' end of the tRNA primer to perfom a short round of RNA-dependent minus-strand DNA synthesis. The reading proceeds through the U5 region and ends after the repeated (R) region which is present at both ends of viral RNA. The portion of the RNA-DNA heteroduplex is digested by the RNase H, resulting in a ssDNA product attached to the tRNA primer. This ssDNA/tRNA hybridizes with the identical R region situated at the 3' end of viral RNA. This template exchange, known as minus-strand DNA strong stop transfer, can be either intra- or intermolecular. RT uses the 3' end of this newly synthesized short ssDNA to perfom the RNA-dependent minus-strand DNA synthesis of the whole template. RNase H digests the RNA template except for a polypurine tract (PPT) situated at the 5' end of the genome. It is not clear if both polymerase and RNase H activities are simultaneous. RNase H probably can proceed both in a polymerase-dependent (RNA cut into small fragments by the same RT performing DNA synthesis) and a polymerase-independent mode (cleavage of remaining RNA fragments by free RTs). Secondly, RT performs DNA-directed plus-strand DNA synthesis using the PPT that has not been removed by RNase H as primers. PPT and tRNA primers are then removed by RNase H. The 3' and 5' ssDNA PBS regions hybridize to form a circular dsDNA intermediate. Strand displacement synthesis by RT to the PBS and PPT ends produces a blunt ended, linear dsDNA copy of the viral genome that includes long terminal repeats (LTRs) at both ends. Its function is as follows. Catalyzes viral DNA integration into the host chromosome, by performing a series of DNA cutting and joining reactions. The chain is Gag-Pro-Pol polyprotein (gag-pro-pol) from Macaca mulatta (Rhesus macaque).